The following is a 157-amino-acid chain: 6,7-dimethyl-8-ribityllumazine synthase (157 aa).

5-amino-6-(D-ribitylamino)uracil is bound by residues phenylalanine 23, 57 to 59 (AFE), and 81 to 83 (AVI). (2S)-2-hydroxy-3-oxobutyl phosphate is bound at residue 86 to 87 (ST). Histidine 89 functions as the Proton donor in the catalytic mechanism. Position 114 (phenylalanine 114) interacts with 5-amino-6-(D-ribitylamino)uracil. Arginine 128 is a (2S)-2-hydroxy-3-oxobutyl phosphate binding site.

Belongs to the DMRL synthase family.

It catalyses the reaction (2S)-2-hydroxy-3-oxobutyl phosphate + 5-amino-6-(D-ribitylamino)uracil = 6,7-dimethyl-8-(1-D-ribityl)lumazine + phosphate + 2 H2O + H(+). Its pathway is cofactor biosynthesis; riboflavin biosynthesis; riboflavin from 2-hydroxy-3-oxobutyl phosphate and 5-amino-6-(D-ribitylamino)uracil: step 1/2. In terms of biological role, catalyzes the formation of 6,7-dimethyl-8-ribityllumazine by condensation of 5-amino-6-(D-ribitylamino)uracil with 3,4-dihydroxy-2-butanone 4-phosphate. This is the penultimate step in the biosynthesis of riboflavin. In Desulfosudis oleivorans (strain DSM 6200 / JCM 39069 / Hxd3) (Desulfococcus oleovorans), this protein is 6,7-dimethyl-8-ribityllumazine synthase.